Consider the following 358-residue polypeptide: UPF0324 membrane protein CT0845 (358 aa).

Transmembrane regions (helical) follow at residues Y36–L53, Y57–S76, L83–I105, V115–A134, G146–L168, T178–A200, L244–F261, L276–V295, V307–L325, and P335–M357.

The protein belongs to the UPF0324 family.

The protein resides in the cell membrane. In Chlorobaculum tepidum (strain ATCC 49652 / DSM 12025 / NBRC 103806 / TLS) (Chlorobium tepidum), this protein is UPF0324 membrane protein CT0845.